Consider the following 849-residue polypeptide: DNA mismatch repair protein MutS (849 aa).

602–609 (GPNMSGKS) provides a ligand contact to ATP.

Belongs to the DNA mismatch repair MutS family.

This protein is involved in the repair of mismatches in DNA. It is possible that it carries out the mismatch recognition step. This protein has a weak ATPase activity. The chain is DNA mismatch repair protein MutS from Streptococcus sanguinis (strain SK36).